We begin with the raw amino-acid sequence, 513 residues long: NADH-quinone oxidoreductase subunit N (513 aa).

Transmembrane regions (helical) follow at residues serine 20–valine 40, serine 49–glutamine 69, phenylalanine 88–methionine 108, isoleucine 117–methionine 137, leucine 144–phenylalanine 164, leucine 178–valine 198, phenylalanine 219–valine 239, leucine 260–leucine 280, tryptophan 295–leucine 315, leucine 323–aspartate 343, leucine 351–isoleucine 371, glycine 394–isoleucine 414, isoleucine 429–isoleucine 451, and leucine 474–phenylalanine 494.

Belongs to the complex I subunit 2 family. NDH-1 is composed of 14 different subunits. Subunits NuoA, H, J, K, L, M, N constitute the membrane sector of the complex.

The protein resides in the cell inner membrane. It catalyses the reaction a quinone + NADH + 5 H(+)(in) = a quinol + NAD(+) + 4 H(+)(out). Functionally, NDH-1 shuttles electrons from NADH, via FMN and iron-sulfur (Fe-S) centers, to quinones in the respiratory chain. The immediate electron acceptor for the enzyme in this species is believed to be a menaquinone. Couples the redox reaction to proton translocation (for every two electrons transferred, four hydrogen ions are translocated across the cytoplasmic membrane), and thus conserves the redox energy in a proton gradient. The chain is NADH-quinone oxidoreductase subunit N from Chlorobium chlorochromatii (strain CaD3).